A 56-amino-acid polypeptide reads, in one-letter code: Sec-independent protein translocase protein TatA (56 aa).

Residues 1 to 21 traverse the membrane as a helical segment; sequence MALGPWQIFLILVIILVLFGA.

Belongs to the TatA/E family. In terms of assembly, the Tat system comprises two distinct complexes: a TatABC complex, containing multiple copies of TatA, TatB and TatC subunits, and a separate TatA complex, containing only TatA subunits. Substrates initially bind to the TatABC complex, which probably triggers association of the separate TatA complex to form the active translocon.

The protein resides in the cell inner membrane. In terms of biological role, part of the twin-arginine translocation (Tat) system that transports large folded proteins containing a characteristic twin-arginine motif in their signal peptide across membranes. TatA could form the protein-conducting channel of the Tat system. This is Sec-independent protein translocase protein TatA from Ehrlichia ruminantium (strain Welgevonden).